A 312-amino-acid chain; its full sequence is Malate dehydrogenase (312 aa).

Residues G12 to G17 and D36 each bind NAD(+). Substrate contacts are provided by R87 and R93. NAD(+) is bound by residues N100 and L123–N125. A substrate-binding site is contributed by N125. S149 carries the post-translational modification Phosphoserine. Position 156 (R156) interacts with substrate. H180 functions as the Proton acceptor in the catalytic mechanism.

This sequence belongs to the LDH/MDH superfamily. MDH type 3 family.

The catalysed reaction is (S)-malate + NAD(+) = oxaloacetate + NADH + H(+). In terms of biological role, catalyzes the reversible oxidation of malate to oxaloacetate. This Bacillus mycoides (strain KBAB4) (Bacillus weihenstephanensis) protein is Malate dehydrogenase.